We begin with the raw amino-acid sequence, 186 residues long: Ribosome-recycling factor (186 aa).

It belongs to the RRF family.

The protein localises to the cytoplasm. Its function is as follows. Responsible for the release of ribosomes from messenger RNA at the termination of protein biosynthesis. May increase the efficiency of translation by recycling ribosomes from one round of translation to another. The polypeptide is Ribosome-recycling factor (Ralstonia pickettii (strain 12J)).